A 318-amino-acid polypeptide reads, in one-letter code: HPr kinase/phosphorylase (318 aa).

Residues His-143 and Lys-164 contribute to the active site. 158–165 (GKSGVGKS) is an ATP binding site. Ser-165 contacts Mg(2+). The active-site Proton acceptor; for phosphorylation activity. Proton donor; for dephosphorylation activity is the Asp-182. An important for the catalytic mechanism of both phosphorylation and dephosphorylation region spans residues 206–215 (MEIRGLGILN). Glu-207 contributes to the Mg(2+) binding site. The active site involves Arg-248. Residues 269–274 (PVKPGR) form an important for the catalytic mechanism of dephosphorylation region.

The protein belongs to the HPrK/P family. In terms of assembly, homohexamer. Mg(2+) serves as cofactor.

The enzyme catalyses [HPr protein]-L-serine + ATP = [HPr protein]-O-phospho-L-serine + ADP + H(+). It carries out the reaction [HPr protein]-O-phospho-L-serine + phosphate + H(+) = [HPr protein]-L-serine + diphosphate. Its function is as follows. Catalyzes the ATP- as well as the pyrophosphate-dependent phosphorylation of a specific serine residue in HPr, a phosphocarrier protein of the phosphoenolpyruvate-dependent sugar phosphotransferase system (PTS). HprK/P also catalyzes the pyrophosphate-producing, inorganic phosphate-dependent dephosphorylation (phosphorolysis) of seryl-phosphorylated HPr (P-Ser-HPr). The sequence is that of HPr kinase/phosphorylase from Leptospira borgpetersenii serovar Hardjo-bovis (strain JB197).